We begin with the raw amino-acid sequence, 217 residues long: Protein-L-isoaspartate O-methyltransferase (217 aa).

The active site involves Ser64.

The protein belongs to the methyltransferase superfamily. L-isoaspartyl/D-aspartyl protein methyltransferase family.

The protein resides in the cytoplasm. It catalyses the reaction [protein]-L-isoaspartate + S-adenosyl-L-methionine = [protein]-L-isoaspartate alpha-methyl ester + S-adenosyl-L-homocysteine. Catalyzes the methyl esterification of L-isoaspartyl residues in peptides and proteins that result from spontaneous decomposition of normal L-aspartyl and L-asparaginyl residues. It plays a role in the repair and/or degradation of damaged proteins. This chain is Protein-L-isoaspartate O-methyltransferase, found in Nitrobacter winogradskyi (strain ATCC 25391 / DSM 10237 / CIP 104748 / NCIMB 11846 / Nb-255).